The following is a 327-amino-acid chain: MIYQMQMPAKIEVDESSHTDCFGRFIAQPLERGYGVTLGNVMRRVLLASLPGTAITGIKIDGVFHEFAAIDGVREDVPEIVLNLKKVRFKSTCKRNCKTSLTLVGPMDFTAGDIIAQEGEFEVLNKDMHVATINAGATVKIDLYIGRGRGYMPAEENRPEGMPIGYIAVDAIYTPIRNVKFTVENTRVGQRTDYEKMILDVETDGSVSPDDSISLAGKIITDHVTFFANFSPTEEEFTEEEFKQQDDEFETMRRLFHTKIEDLDLSVRSHNCLRLAEIDTIGELVSHKEDELLNYKNFGKKSLTELKEQLEKFDLKFGMDITKYQMK.

The alpha N-terminal domain (alpha-NTD) stretch occupies residues 1 to 231 (MIYQMQMPAK…DHVTFFANFS (231 aa)). An alpha C-terminal domain (alpha-CTD) region spans residues 252 to 327 (MRRLFHTKIE…GMDITKYQMK (76 aa)).

The protein belongs to the RNA polymerase alpha chain family. Homodimer. The RNAP catalytic core consists of 2 alpha, 1 beta, 1 beta' and 1 omega subunit. When a sigma factor is associated with the core the holoenzyme is formed, which can initiate transcription.

The enzyme catalyses RNA(n) + a ribonucleoside 5'-triphosphate = RNA(n+1) + diphosphate. In terms of biological role, DNA-dependent RNA polymerase catalyzes the transcription of DNA into RNA using the four ribonucleoside triphosphates as substrates. The polypeptide is DNA-directed RNA polymerase subunit alpha (Pelodictyon phaeoclathratiforme (strain DSM 5477 / BU-1)).